Reading from the N-terminus, the 290-residue chain is MKIRIAARGSKLSLKQVEIVTTYLQAKGYETEFIEIKTKADLFGNKPLHEIGKGVFEKEVNEAVLQGRADIAVHSMKDMSSELPPGLELLATPKRENPVDVLVSELNLEELPEKSRIGTGSLRRANFLKVVRPDLVVENIRGNVDTRLRKYRDHEYDGIILAEAGLRRLGVEVKRFPLDVESFTPEPNQGIIAVVGSPKFLGLFQELNDTGTMKEALAEKETVKVVGGGCHSPLGVLFRLEDDVLHGIASYSNGVKRVTVKLSTRESPQIAGNQLGKALVKAMKDEGLIP.

Cysteine 230 is modified (S-(dipyrrolylmethanemethyl)cysteine).

The protein belongs to the HMBS family. Dipyrromethane serves as cofactor.

It carries out the reaction 4 porphobilinogen + H2O = hydroxymethylbilane + 4 NH4(+). It functions in the pathway porphyrin-containing compound metabolism; protoporphyrin-IX biosynthesis; coproporphyrinogen-III from 5-aminolevulinate: step 2/4. Tetrapolymerization of the monopyrrole PBG into the hydroxymethylbilane pre-uroporphyrinogen in several discrete steps. This Metallosphaera sedula (strain ATCC 51363 / DSM 5348 / JCM 9185 / NBRC 15509 / TH2) protein is Probable porphobilinogen deaminase.